The following is a 645-amino-acid chain: Synaptotagmin-16 (645 aa).

Disordered regions lie at residues 102-121, 144-192, and 206-344; these read AQNSSPSLSQHAKDSCSTMS, EHHL…DSDE, and QSFR…PSGV. Residues 167 to 177 show a composition bias toward polar residues; that stretch reads ETVNGKKQVNS. Acidic residues predominate over residues 179–192; that stretch reads GDDEELSTSSDSDE. The span at 287–303 shows a compositional bias: polar residues; sequence HQESSVVQSLRRQSTEG. A C2 1 domain is found at 350-469; it reads KCGDLDVIFE…HPEGEMKVTL (120 aa). The segment at 478–503 is disordered; the sequence is SSGGSPLSPSAVSHSDSTSSTQSLSH. Low complexity predominate over residues 485-502; the sequence is SPSAVSHSDSTSSTQSLS. The C2 2 domain maps to 505–640; it reads GAPELLVGLS…TKGQQICRWH (136 aa).

Belongs to the synaptotagmin family. In terms of assembly, homodimer. Can also form heterodimers. In terms of tissue distribution, expressed in brain.

Its function is as follows. May be involved in the trafficking and exocytosis of secretory vesicles in non-neuronal tissues. Is Ca(2+)-independent. This chain is Synaptotagmin-16 (SYT16), found in Homo sapiens (Human).